The following is a 509-amino-acid chain: 2-isopropylmalate synthase (509 aa).

A Pyruvate carboxyltransferase domain is found at I5 to K267. The Mn(2+) site is built by D14, H202, H204, and N238. The interval K391 to N509 is regulatory domain.

It belongs to the alpha-IPM synthase/homocitrate synthase family. LeuA type 1 subfamily. In terms of assembly, homodimer. Requires Mn(2+) as cofactor.

The protein resides in the cytoplasm. The enzyme catalyses 3-methyl-2-oxobutanoate + acetyl-CoA + H2O = (2S)-2-isopropylmalate + CoA + H(+). It functions in the pathway amino-acid biosynthesis; L-leucine biosynthesis; L-leucine from 3-methyl-2-oxobutanoate: step 1/4. Catalyzes the condensation of the acetyl group of acetyl-CoA with 3-methyl-2-oxobutanoate (2-ketoisovalerate) to form 3-carboxy-3-hydroxy-4-methylpentanoate (2-isopropylmalate). In Staphylococcus aureus (strain bovine RF122 / ET3-1), this protein is 2-isopropylmalate synthase.